The chain runs to 462 residues: Na(+)/H(+) antiporter NhaA 2 (462 aa).

Residues 1–31 (MKSSTREQTPVTSPTPHDPTPPTPPRGSTPL) are disordered. Over residues 16 to 27 (PHDPTPPTPPRG) the composition is skewed to pro residues. 11 helical membrane passes run 52-72 (IGGALLLLGTVVALVWANSPW), 96-116 (LTLGQWAADGLLAIFFFIAGL), 134-154 (LVPVAAAVGGMAVPAVVYVLV), 165-185 (GWAIPTATDIAFAVAVLAVIS), 195-215 (FLLTLAVVDDLLAITIIAIFY), 218-238 (TLAVLPLLGALAVIAVFGLLV), 244-264 (SWWLLIPLAVVAWALMHASGI), 309-329 (FAVPVFAFFSAGVTVGGLSGL), 337-357 (VALGIVAGLVVGKAAGILGAT), 382-402 (LLGGIGFTVSLLIGELAFGAG), and 408-428 (HVKVGVLTGSLLAAALAAVVL).

Belongs to the NhaA Na(+)/H(+) (TC 2.A.33) antiporter family.

The protein resides in the cell membrane. It carries out the reaction Na(+)(in) + 2 H(+)(out) = Na(+)(out) + 2 H(+)(in). Its function is as follows. Na(+)/H(+) antiporter that extrudes sodium in exchange for external protons. The polypeptide is Na(+)/H(+) antiporter NhaA 2 (Kineococcus radiotolerans (strain ATCC BAA-149 / DSM 14245 / SRS30216)).